We begin with the raw amino-acid sequence, 401 residues long: Probable thioesterase FGSG_00047 (401 aa).

Residues 379-401 (AREMDQRKRQKDFTHTTIHDKNS) form a disordered region.

This sequence belongs to the AMT4 thioesterase family.

Its pathway is mycotoxin biosynthesis. Probable thioesterase; part of the gene cluster that mediates the biosynthesis of gramillins A and B, bicyclic lipopeptides that induce cell death in maize leaves but not in wheat leaves. The nonribosomal peptide synthetase GRA1 incorporates respectively a glutamic adic (Glu), a leucine (Leu), a serine (Ser), a hydroxyglutamine (HOGln), a 2-amino decanoic acid, and 2 cysteins (CysB and CysA). The biosynthesis of 2-amino decanoic acid incorporated in gramillins could be initiated by a fatty acid synthase composed of the alpha and beta subunits FGSG_00036 and FGSG_11656. The cytochrome P450 monooxygenase FGSG_15680 could hydroxylate the fatty acid chain. Subsequent oxidation to the ketone by the oxidoreductase FGSG_00048 and transamination by aminotransferase FGSG_00049 could form 2-amino-decanoic acid. On the other hand, FGSG_15680 could also be responsible for the HO-modified glutamine at the gamma-position. Whether hydroxylation occurs on the fully assembled product or on the Gln residue prior to assembly into the gramillins requires further proof. The thioredoxin FGSG_00043 could also be required for the disulfide-bond formation between CysA and CysB. The specific involvement of the remaining proteins from the cluster is more difficult to discern, but could have broader regulatory (FGSG_00040 and FGSG_11657) or enzymatic functions (FGSG_00044 and FGSG_00045). The final C-domain of GRA1 does not possess the expected sequence of a termination CT domain, often implicated in macrocyclization and release of a cyclopeptidein fungal NRPs; and the thioesterase FGSG_00047 may act in concert with the terminal C-domain of GRA1 to catalyze the formation of the macrocyclic anhydride and release of the products. The chain is Probable thioesterase FGSG_00047 from Gibberella zeae (strain ATCC MYA-4620 / CBS 123657 / FGSC 9075 / NRRL 31084 / PH-1) (Wheat head blight fungus).